Consider the following 289-residue polypeptide: Phosphatidylserine decarboxylase proenzyme (289 aa).

Catalysis depends on charge relay system; for autoendoproteolytic cleavage activity residues D89, H146, and S252. S252 functions as the Schiff-base intermediate with substrate; via pyruvic acid; for decarboxylase activity in the catalytic mechanism. Residue S252 is modified to Pyruvic acid (Ser); by autocatalysis.

Belongs to the phosphatidylserine decarboxylase family. PSD-B subfamily. Prokaryotic type I sub-subfamily. Heterodimer of a large membrane-associated beta subunit and a small pyruvoyl-containing alpha subunit. Pyruvate serves as cofactor. Is synthesized initially as an inactive proenzyme. Formation of the active enzyme involves a self-maturation process in which the active site pyruvoyl group is generated from an internal serine residue via an autocatalytic post-translational modification. Two non-identical subunits are generated from the proenzyme in this reaction, and the pyruvate is formed at the N-terminus of the alpha chain, which is derived from the carboxyl end of the proenzyme. The autoendoproteolytic cleavage occurs by a canonical serine protease mechanism, in which the side chain hydroxyl group of the serine supplies its oxygen atom to form the C-terminus of the beta chain, while the remainder of the serine residue undergoes an oxidative deamination to produce ammonia and the pyruvoyl prosthetic group on the alpha chain. During this reaction, the Ser that is part of the protease active site of the proenzyme becomes the pyruvoyl prosthetic group, which constitutes an essential element of the active site of the mature decarboxylase.

Its subcellular location is the cell membrane. It catalyses the reaction a 1,2-diacyl-sn-glycero-3-phospho-L-serine + H(+) = a 1,2-diacyl-sn-glycero-3-phosphoethanolamine + CO2. Its pathway is phospholipid metabolism; phosphatidylethanolamine biosynthesis; phosphatidylethanolamine from CDP-diacylglycerol: step 2/2. Catalyzes the formation of phosphatidylethanolamine (PtdEtn) from phosphatidylserine (PtdSer). The chain is Phosphatidylserine decarboxylase proenzyme from Nitrosospira multiformis (strain ATCC 25196 / NCIMB 11849 / C 71).